Reading from the N-terminus, the 244-residue chain is 7-cyano-7-deazaguanine synthase (244 aa).

14-24 (FSGGQDSATCV) lines the ATP pocket. 4 residues coordinate Zn(2+): C202, C217, C220, and C223.

The protein belongs to the QueC family. Requires Zn(2+) as cofactor.

The catalysed reaction is 7-carboxy-7-deazaguanine + NH4(+) + ATP = 7-cyano-7-deazaguanine + ADP + phosphate + H2O + H(+). It participates in purine metabolism; 7-cyano-7-deazaguanine biosynthesis. Catalyzes the ATP-dependent conversion of 7-carboxy-7-deazaguanine (CDG) to 7-cyano-7-deazaguanine (preQ(0)). The polypeptide is 7-cyano-7-deazaguanine synthase (Burkholderia vietnamiensis (strain G4 / LMG 22486) (Burkholderia cepacia (strain R1808))).